Here is a 79-residue protein sequence, read N- to C-terminus: Short neurotoxin 2 (79 aa).

An N-terminal signal peptide occupies residues 1–19 (PLLLTLVVVTIVCLDLGYT). 4 cysteine pairs are disulfide-bonded: C22–C41, C36–C58, C60–C71, and C72–C77.

It belongs to the three-finger toxin family. Short-chain subfamily. Type I alpha-neurotoxin sub-subfamily. In terms of tissue distribution, expressed by the venom gland.

It is found in the secreted. Functionally, binds to muscle nicotinic acetylcholine receptor (nAChR) and inhibit acetylcholine from binding to the receptor, thereby impairing neuromuscular transmission. This Hydrophis cyanocinctus (Asian annulated sea snake) protein is Short neurotoxin 2.